Reading from the N-terminus, the 95-residue chain is MGAVFAIIGGFALDSPILRLYLDQLSLNHFTDIVGATKVSSLNIPWPLRIPRRIRLPGRLYNMKYCFINRLIHFPNCRNSNNFYNSEKPSPQNEK.

A signal peptide spans 1–20 (MGAVFAIIGGFALDSPILRL).

This is Blastocyst protein 4 from Oryctolagus cuniculus (Rabbit).